A 275-amino-acid chain; its full sequence is NH(3)-dependent NAD(+) synthetase (275 aa).

Residue G47–S54 participates in ATP binding. D53 lines the Mg(2+) pocket. Residue R141 participates in deamido-NAD(+) binding. ATP is bound at residue T161. E166 lines the Mg(2+) pocket. Residues K174 and D181 each coordinate deamido-NAD(+). 2 residues coordinate ATP: K190 and T212. Residue H261–K262 participates in deamido-NAD(+) binding.

This sequence belongs to the NAD synthetase family. Homodimer.

The catalysed reaction is deamido-NAD(+) + NH4(+) + ATP = AMP + diphosphate + NAD(+) + H(+). Its pathway is cofactor biosynthesis; NAD(+) biosynthesis; NAD(+) from deamido-NAD(+) (ammonia route): step 1/1. In terms of biological role, catalyzes the ATP-dependent amidation of deamido-NAD to form NAD. Uses ammonia as a nitrogen source. This is NH(3)-dependent NAD(+) synthetase from Lacticaseibacillus casei (strain BL23) (Lactobacillus casei).